A 667-amino-acid polypeptide reads, in one-letter code: DNA ligase (667 aa).

NAD(+) contacts are provided by residues 34-38 (DAEYD), 83-84 (SL), and Glu113. Lys115 serves as the catalytic N6-AMP-lysine intermediate. NAD(+) contacts are provided by Arg136, Glu170, Lys286, and Lys310. Zn(2+) is bound by residues Cys404, Cys407, Cys422, and Cys427. The region spanning 589–667 (ATDSVLSGKT…EQQLEDVVGK (79 aa)) is the BRCT domain.

It belongs to the NAD-dependent DNA ligase family. LigA subfamily. Mg(2+) serves as cofactor. Requires Mn(2+) as cofactor.

The catalysed reaction is NAD(+) + (deoxyribonucleotide)n-3'-hydroxyl + 5'-phospho-(deoxyribonucleotide)m = (deoxyribonucleotide)n+m + AMP + beta-nicotinamide D-nucleotide.. Its function is as follows. DNA ligase that catalyzes the formation of phosphodiester linkages between 5'-phosphoryl and 3'-hydroxyl groups in double-stranded DNA using NAD as a coenzyme and as the energy source for the reaction. It is essential for DNA replication and repair of damaged DNA. In Oceanobacillus iheyensis (strain DSM 14371 / CIP 107618 / JCM 11309 / KCTC 3954 / HTE831), this protein is DNA ligase.